The primary structure comprises 240 residues: Uridylate kinase (240 aa).

Residue Lys12 to Gly15 coordinates ATP. The segment at Gly20 to Gly25 is involved in allosteric activation by GTP. Gly54 contributes to the UMP binding site. Gly55 and Arg59 together coordinate ATP. Residues Asp74 and Thr135–Thr142 contribute to the UMP site. ATP contacts are provided by Asn163, Tyr169, and Asp172.

This sequence belongs to the UMP kinase family. As to quaternary structure, homohexamer.

It is found in the cytoplasm. It carries out the reaction UMP + ATP = UDP + ADP. It participates in pyrimidine metabolism; CTP biosynthesis via de novo pathway; UDP from UMP (UMPK route): step 1/1. Allosterically activated by GTP. Inhibited by UTP. Catalyzes the reversible phosphorylation of UMP to UDP. This is Uridylate kinase from Bacillus velezensis (strain DSM 23117 / BGSC 10A6 / LMG 26770 / FZB42) (Bacillus amyloliquefaciens subsp. plantarum).